The sequence spans 323 residues: DNA-directed RNA polymerase subunit alpha (323 aa).

The tract at residues 1–225 (MLDIAMPKIE…QYSQTIADFN (225 aa)) is alpha N-terminal domain (alpha-NTD). The tract at residues 246 to 323 (IYDTPIEELD…SHAARAEIEG (78 aa)) is alpha C-terminal domain (alpha-CTD).

This sequence belongs to the RNA polymerase alpha chain family. As to quaternary structure, homodimer. The RNAP catalytic core consists of 2 alpha, 1 beta, 1 beta' and 1 omega subunit. When a sigma factor is associated with the core the holoenzyme is formed, which can initiate transcription.

The enzyme catalyses RNA(n) + a ribonucleoside 5'-triphosphate = RNA(n+1) + diphosphate. Functionally, DNA-dependent RNA polymerase catalyzes the transcription of DNA into RNA using the four ribonucleoside triphosphates as substrates. This is DNA-directed RNA polymerase subunit alpha from Roseiflexus sp. (strain RS-1).